The chain runs to 309 residues: Porphobilinogen deaminase (309 aa).

At Cys241 the chain carries S-(dipyrrolylmethanemethyl)cysteine.

This sequence belongs to the HMBS family. In terms of assembly, monomer. Dipyrromethane serves as cofactor.

The catalysed reaction is 4 porphobilinogen + H2O = hydroxymethylbilane + 4 NH4(+). The protein operates within porphyrin-containing compound metabolism; protoporphyrin-IX biosynthesis; coproporphyrinogen-III from 5-aminolevulinate: step 2/4. In terms of biological role, tetrapolymerization of the monopyrrole PBG into the hydroxymethylbilane pre-uroporphyrinogen in several discrete steps. In Bacillus cereus (strain AH187), this protein is Porphobilinogen deaminase.